An 82-amino-acid polypeptide reads, in one-letter code: MQTASWVMVMMMVWITAPLSEGGKLNDVIRGLVPDDVTPQLILRSLFFHRPSDSVVRSTVPVHICYWKVCPPSPWRRPNGKG.

The N-terminal stretch at 1 to 22 (MQTASWVMVMMMVWITAPLSEG) is a signal peptide. The propeptide occupies 23-57 (GKLNDVIRGLVPDDVTPQLILRSLFFHRPSDSVVR). A disulfide bridge connects residues cysteine 65 and cysteine 70. At tryptophan 67 the chain carries D-tryptophan. 4-hydroxyproline occurs at positions 71, 72, and 74. Residues 75–82 (WRRPNGKG) constitute a propeptide that is removed on maturation.

The protein belongs to the conotoxin C superfamily. Consomatin family. Expressed by the venom duct.

The protein localises to the secreted. In terms of biological role, moderately activates human somatostatin receptors (SSTR) with a preferential activation of SSTR1 and SSTR4. In vivo, does not cause behavioral changes in mice within a few minutes of intracranial injection, but causes a progressive loss of movement thereafter. Four to five hours after injection, mice recover, even with the highest dose tested. Shows antinociception and antihyperalgesia activities in two mouse models of acute pain, most probably by acting outside the central nervous system. This Conus maioensis (Sea snail) protein is Consomatin Mao1.